We begin with the raw amino-acid sequence, 129 residues long: MAKAKTERRLKDNEAQAIARTLRVSPQKLNLVAALIRGKKVDRALAELEFSRKRIAGTVKKTLESAIANAENNHDLDVDALVVAEAYVGKSITMKRFHARGRGRASRIEKPFAHLTIVVREVEEKGEAA.

Belongs to the universal ribosomal protein uL22 family. Part of the 50S ribosomal subunit.

This protein binds specifically to 23S rRNA; its binding is stimulated by other ribosomal proteins, e.g. L4, L17, and L20. It is important during the early stages of 50S assembly. It makes multiple contacts with different domains of the 23S rRNA in the assembled 50S subunit and ribosome. In terms of biological role, the globular domain of the protein is located near the polypeptide exit tunnel on the outside of the subunit, while an extended beta-hairpin is found that lines the wall of the exit tunnel in the center of the 70S ribosome. The polypeptide is Large ribosomal subunit protein uL22 (Agrobacterium fabrum (strain C58 / ATCC 33970) (Agrobacterium tumefaciens (strain C58))).